We begin with the raw amino-acid sequence, 1210 residues long: MHPKRSSQGDGSVTKPVRTSDRLRRRPKLHGRSYLYYSSPNMLHNRKRNTKTRTAASQIAKMLHKGNRPARASNAAPIASDLRRSTRKRRISVNLEDYTDSSGAEDEDMMSPAYRTLRRRVHKNFSTSKSRKDMDAELAPRREGLRPRRSTTIANKRLKTESGADQDTSEEKDGQDETENGNELDDADDGENEVEAEDEGNGEDEGDGEDEGEEDGDDDEEGDEEQEGRKRYDLRNRAEVRRMPTGEINKQQQPRSPRRVLHQGMGTRVGRDGRRGGSRPHKRHRFTRTDDSDDSLLVDELDQGPAIPWARGGNRSGAPWLFGGLDTYGSSSLGLNVGASGWGHQSDGLAALTSGVQTAGPSSKGGADIQPLQINEDINFDDIGGLSEYINDLKEMVFFPLLYPEFFASYSITPPRGVLLCGPPGTGKTLIARALACAASKAGQKVSFYMRKGADVLSKWVGEAERQLKLLFEEAQRNQPSIIFFDEIDGLAPVRSSKQEQIHNSIVSTLLALMDGLDSRGQVVLIGATNRVDAIDGALRRPGRFDREFNFSLPGCEARAEILDIHTRKWKHPPTRELKEELAATCVGYCGADLKALCTEAAIRAFREKYPQVYTSDDKYAIDVGLVNVEKSHFVEAMSAITPAAHRGSVVQSRPLSPVVLPCLHRHLLESMSLISDIFPSSATSSELTKLSILTFGSAIPLVYRPRLLLLGGEGVGLDHLGPAILHELEKFPIHSLGLPSLLSDPGAKTPEEALVHIFSEARRTTPSILYIPMFNNWWENAHEQLRAVFLTLLEELPSNLPILLLATSYGELSDMEEQSVFDNRSVYTVDKPSSEDRSLFFDRLIEAALSVISGLNGKPDGPQPLPELPKVPKEPTGPKPAEVKAKVEAEQHALRRLRMCLRDVCNRILYDKRFSAFHFPVTDEDAPNYRSIIQIPMDTATLLQRVDTGQYLTCTPFLQDVDLIVRNAKAYNGDDYAGARIVSRAYELRDVVHGMLSQMDPALLTYCDKIAAEGGPSLIPDDLSGSILGLAPVVQMGTVTRTSARLRNVQPEVNLDRDYEGLKKPKKTTDAVSIDSAADKSQNQDSGQEMPSPDAANPQSAAPSPTDGDREDQSEPPSKEASAEDMSGDSCKGPAAKSDKEISSRTESVKGVFMERTDNYSIPQMERLYTRIMKGVLETLDKGLRDDDNNPKHSILRFLSEFAQHQANF.

The span at Met1–Gly11 shows a compositional bias: polar residues. Disordered stretches follow at residues Met1 to Arg32 and Leu63 to Asp291. Residues Asp97–Met109 show a composition bias toward acidic residues. The span at Ser130–Arg146 shows a compositional bias: basic and acidic residues. Over residues Asp167–Gln226 the composition is skewed to acidic residues. A compositionally biased stretch (basic and acidic residues) spans Glu227–Pro244. The span at Gly276 to Phe286 shows a compositional bias: basic residues. ATP is bound at residue Gly422–Thr429. Residues Leu856–Glu883 are disordered. One can recognise a Bromo domain in the interval Arg897 to Met1000. Over residues Asp1057 to Thr1070 the composition is skewed to basic and acidic residues. Positions Asp1057–Lys1151 are disordered. Residues Asp1080–Glu1090 show a composition bias toward polar residues. 2 stretches are compositionally biased toward basic and acidic residues: residues Asp1108–Ser1123 and Lys1138–Lys1151.

This sequence belongs to the AAA ATPase family.

The chain is ATPase family AAA domain-containing protein At1g05910 from Arabidopsis thaliana (Mouse-ear cress).